Reading from the N-terminus, the 85-residue chain is Small ribosomal subunit protein bS16 (85 aa).

The protein belongs to the bacterial ribosomal protein bS16 family.

The polypeptide is Small ribosomal subunit protein bS16 (Acinetobacter baylyi (strain ATCC 33305 / BD413 / ADP1)).